Consider the following 182-residue polypeptide: uncharacterized protein (182 aa).

This is an uncharacterized protein from Haemophilus influenzae (strain ATCC 51907 / DSM 11121 / KW20 / Rd).